The following is a 276-amino-acid chain: Tryptophan synthase alpha chain (276 aa).

Catalysis depends on proton acceptor residues Glu-55 and Asp-66.

Belongs to the TrpA family. Tetramer of two alpha and two beta chains.

The catalysed reaction is (1S,2R)-1-C-(indol-3-yl)glycerol 3-phosphate + L-serine = D-glyceraldehyde 3-phosphate + L-tryptophan + H2O. Its pathway is amino-acid biosynthesis; L-tryptophan biosynthesis; L-tryptophan from chorismate: step 5/5. The alpha subunit is responsible for the aldol cleavage of indoleglycerol phosphate to indole and glyceraldehyde 3-phosphate. In Gloeobacter violaceus (strain ATCC 29082 / PCC 7421), this protein is Tryptophan synthase alpha chain.